Here is a 954-residue protein sequence, read N- to C-terminus: Isoleucine--tRNA ligase (954 aa).

The 'HIGH' region signature appears at 58–68 (PYANGDIHIGH). E572 lines the L-isoleucyl-5'-AMP pocket. Positions 613–617 (KMSKS) match the 'KMSKS' region motif. K616 is a binding site for ATP. Residues C917, C920, C937, and C940 each contribute to the Zn(2+) site.

It belongs to the class-I aminoacyl-tRNA synthetase family. IleS type 1 subfamily. In terms of assembly, monomer. Requires Zn(2+) as cofactor.

Its subcellular location is the cytoplasm. The catalysed reaction is tRNA(Ile) + L-isoleucine + ATP = L-isoleucyl-tRNA(Ile) + AMP + diphosphate. Catalyzes the attachment of isoleucine to tRNA(Ile). As IleRS can inadvertently accommodate and process structurally similar amino acids such as valine, to avoid such errors it has two additional distinct tRNA(Ile)-dependent editing activities. One activity is designated as 'pretransfer' editing and involves the hydrolysis of activated Val-AMP. The other activity is designated 'posttransfer' editing and involves deacylation of mischarged Val-tRNA(Ile). This chain is Isoleucine--tRNA ligase, found in Photobacterium profundum (strain SS9).